Consider the following 539-residue polypeptide: Neutral amino acid transporter B(0) (539 aa).

M1 carries the N-acetylmethionine modification. Residues 1–52 (MVADPPKGDPKGYAAAEPTANGVSMLVPIEDVGSLKGGRCGSGDQVRRCLRA) lie on the Cytoplasmic side of the membrane. The chain crosses the membrane as a helical span at residues 53-82 (NLLVLLTVVAVVAGVALGLGVSGAGGAFAL). Topologically, residues 83–95 (GPARLEAFSFPGE) are extracellular. A helical transmembrane segment spans residues 96 to 117 (LLLRLLKMIILPLVVCSLIGGA). Residues 118–131 (ASLDPSALGRLGAW) lie on the Cytoplasmic side of the membrane. The chain crosses the membrane as a helical span at residues 132 to 154 (ALLFFLVTTLLASALGVGLALAL). The Extracellular segment spans residues 155 to 223 (QPGAAFAAIN…GTLVKVPTGG (69 aa)). N164 and N213 each carry an N-linked (GlcNAc...) asparagine glycan. The chain crosses the membrane as a helical span at residues 224–247 (EVEGMNILGLVVFAIIFGVALRKL). At 248–256 (GPEGELLIR) the chain is on the cytoplasmic side. A helical membrane pass occupies residues 257-284 (FFNSFNDATMVLVSWIMWYAPVGILFLV). Topologically, residues 285–305 (AGKIVEMENVGLLFASLGKYI) are extracellular. A helical transmembrane segment spans residues 306–327 (LCCLLGHAIHGLLTLPLIYFLF). Residues 328–332 (ARKNP) lie on the Cytoplasmic side of the membrane. The segment at residues 333 to 363 (YRFLWGIMTPLATAFGTSSSSATLPLMMKCV) is an intramembrane region (discontinuously helical). Residues 364 to 372 (EEKNGVARH) are Cytoplasmic-facing. The helical transmembrane segment at 373–399 (ISRFILPIGATVNMDGAALFQCVAAVF) threads the bilayer. 3 residues coordinate Na(+): G381, T383, and N385. Residues 400 to 412 (IAQLNHRSLDFVK) lie on the Extracellular side of the membrane. An intramembrane region (discontinuously helical) is located at residues 413 to 446 (IITILVTATASSVGAAGIPSGGVLTLAIILEAVN). The Extracellular portion of the chain corresponds to 447–459 (LPVHDISLILAVD). The chain crosses the membrane as a helical span at residues 460–481 (WLVDRSCTVLNVEGDAFGAGLL). The Na(+) site is built by N470 and D474. Residues 482-539 (QSYLDRTENCNSVPELIQVKSEMPLAALPVPGEEGNPLLKGCPGPAGDADTCEKESVM) are Cytoplasmic-facing. Residues S493, S502, and S537 each carry the phosphoserine modification. The tract at residues 518–539 (PLLKGCPGPAGDADTCEKESVM) is disordered.

Belongs to the dicarboxylate/amino acid:cation symporter (DAACS) (TC 2.A.23) family. SLC1A5 subfamily. In terms of assembly, homotrimer.

The protein localises to the cell membrane. The protein resides in the melanosome. The enzyme catalyses L-glutamine(out) + L-serine(in) + Na(+)(out) = L-glutamine(in) + L-serine(out) + Na(+)(in). The catalysed reaction is L-glutamine(in) + L-serine(out) + Na(+)(out) = L-glutamine(out) + L-serine(in) + Na(+)(in). It carries out the reaction L-threonine(in) + L-glutamine(out) + Na(+)(out) = L-threonine(out) + L-glutamine(in) + Na(+)(in). It catalyses the reaction L-threonine(out) + L-glutamine(in) + Na(+)(out) = L-threonine(in) + L-glutamine(out) + Na(+)(in). The enzyme catalyses L-asparagine(in) + L-glutamine(out) + Na(+)(out) = L-asparagine(out) + L-glutamine(in) + Na(+)(in). The catalysed reaction is L-asparagine(out) + L-glutamine(in) + Na(+)(out) = L-asparagine(in) + L-glutamine(out) + Na(+)(in). It carries out the reaction L-glutamine(in) + L-alanine(out) + Na(+)(out) = L-glutamine(out) + L-alanine(in) + Na(+)(in). It catalyses the reaction L-valine(out) + L-glutamine(in) + Na(+)(out) = L-valine(in) + L-glutamine(out) + Na(+)(in). The enzyme catalyses L-glutamine(in) + L-methionine(out) + Na(+)(out) = L-glutamine(out) + L-methionine(in) + Na(+)(in). The catalysed reaction is L-glutamine(in) + L-glutamate(out) + Na(+)(out) + H(+)(out) = L-glutamine(out) + L-glutamate(in) + Na(+)(in) + H(+)(in). It carries out the reaction D-serine(in) + L-glutamine(out) + Na(+)(out) = D-serine(out) + L-glutamine(in) + Na(+)(in). It catalyses the reaction D-serine(in) + L-alanine(out) + Na(+)(out) = D-serine(out) + L-alanine(in) + Na(+)(in). The enzyme catalyses nitrate(in) = nitrate(out). The catalysed reaction is iodide(out) = iodide(in). It carries out the reaction thiocyanate(in) = thiocyanate(out). Its function is as follows. Sodium-coupled antiporter of neutral amino acids. In a tri-substrate transport cycle, exchanges neutral amino acids between the extracellular and intracellular compartments, coupled to the inward cotransport of at least one sodium ion. The preferred substrate is the essential amino acid L-glutamine, a precursor for biosynthesis of proteins, nucleotides and amine sugars as well as an alternative fuel for mitochondrial oxidative phosphorylation. Exchanges L-glutamine with other neutral amino acids such as L-serine, L-threonine and L-asparagine in a bidirectional way. Provides L-glutamine to proliferating stem and activated cells driving the metabolic switch toward cell differentiation. The transport cycle is usually pH-independent, with the exception of L-glutamate. Transports extracellular L-glutamate coupled to the cotransport of one proton and one sodium ion in exchange for intracellular L-glutamine counter-ion. May provide for L-glutamate uptake in glial cells regulating glutamine/glutamate cycle in the nervous system. Can transport D-amino acids. Mediates D-serine release from the retinal glia potentially affecting NMDA receptor function in retinal neurons. Displays sodium- and amino acid-dependent but uncoupled channel-like anion conductance with a preference SCN(-) &gt;&gt; NO3(-) &gt; I(-) &gt; Cl(-). Through binding of the fusogenic protein syncytin-1/ERVW-1 may mediate trophoblasts syncytialization, the spontaneous fusion of their plasma membranes, an essential process in placental development. This is Neutral amino acid transporter B(0) (SLC1A5) from Bos taurus (Bovine).